Here is an 85-residue protein sequence, read N- to C-terminus: MFAPPSSLFVPATAPAPSTSGFTIPANLRRDAYVCPFATAEKERKEREQQQPASKGLNHDLAAQEPLHPSLVSRFPSNYRGSFLR.

Disordered stretches follow at residues 1–22 (MFAPPSSLFVPATAPAPSTSGF) and 41–85 (EKER…SFLR). A compositionally biased stretch (polar residues) spans 75–85 (FPSNYRGSFLR).

This is an uncharacterized protein from Dryophytes versicolor (chameleon treefrog).